Reading from the N-terminus, the 116-residue chain is U16-barytoxin-Tl1f (116 aa).

A signal peptide spans 1–20; it reads MKTIIVFLSLLVLATKFGDA. A propeptide spanning residues 21 to 74 is cleaved from the precursor; the sequence is NEGVNQEQMKEVIQNEFREDFLNEMAPMSLLQQLEAIESTLLEKEADRNSRQKR. Disulfide bonds link C75–C90, C82–C95, and C89–C110. N-linked (GlcNAc...) asparagine glycosylation is present at N85.

The protein belongs to the neurotoxin 14 (magi-1) family. 06 (ICK-Trit) subfamily. As to expression, expressed by the venom gland.

The protein localises to the secreted. Functionally, ion channel inhibitor. The protein is U16-barytoxin-Tl1f of Trittame loki (Brush-footed trapdoor spider).